We begin with the raw amino-acid sequence, 206 residues long: dCTP deaminase, dUMP-forming (206 aa).

DCTP is bound by residues Arg-117–Arg-122, Asp-135, Thr-143–Glu-145, Gln-163, Tyr-177, Lys-184, and Gln-188. Catalysis depends on Glu-145, which acts as the Proton donor/acceptor.

It belongs to the dCTP deaminase family. Homotrimer.

The catalysed reaction is dCTP + 2 H2O = dUMP + NH4(+) + diphosphate. It functions in the pathway pyrimidine metabolism; dUMP biosynthesis; dUMP from dCTP: step 1/1. Functionally, bifunctional enzyme that catalyzes both the deamination of dCTP to dUTP and the hydrolysis of dUTP to dUMP without releasing the toxic dUTP intermediate. This Methanococcus vannielii (strain ATCC 35089 / DSM 1224 / JCM 13029 / OCM 148 / SB) protein is dCTP deaminase, dUMP-forming.